A 284-amino-acid polypeptide reads, in one-letter code: 2-dehydro-3-deoxyphosphooctonate aldolase (284 aa).

It belongs to the KdsA family.

It is found in the cytoplasm. The enzyme catalyses D-arabinose 5-phosphate + phosphoenolpyruvate + H2O = 3-deoxy-alpha-D-manno-2-octulosonate-8-phosphate + phosphate. It participates in carbohydrate biosynthesis; 3-deoxy-D-manno-octulosonate biosynthesis; 3-deoxy-D-manno-octulosonate from D-ribulose 5-phosphate: step 2/3. Its pathway is bacterial outer membrane biogenesis; lipopolysaccharide biosynthesis. This Methylobacterium radiotolerans (strain ATCC 27329 / DSM 1819 / JCM 2831 / NBRC 15690 / NCIMB 10815 / 0-1) protein is 2-dehydro-3-deoxyphosphooctonate aldolase.